Consider the following 188-residue polypeptide: Large ribosomal subunit protein eL18 (188 aa).

The interval 147-188 is disordered; that stretch reads EAEKHFGPAPGVPHSHTKPYVRSKGRKFERARGRRASRAYKN. Basic residues-rich tracts occupy residues 161 to 171 and 178 to 188; these read SHTKPYVRSKG and RGRRASRAYKN.

This sequence belongs to the eukaryotic ribosomal protein eL18 family.

Its subcellular location is the cytoplasm. This Caenorhabditis elegans protein is Large ribosomal subunit protein eL18 (rpl-18).